The following is a 156-amino-acid chain: MSLLIDFIDETEEVKEEYVNLIREILGKAAQMEKIEDGAELSVTFVDNERIREINRDYRDKDQPTDVISFAMEEMGEGEMEIVGAEMPRMLGDLIISIPRAKEQAEEYGHSFDRELGFLALHGFLHLLGYDHMTEEDEKEMFGRQKEILEAFGLGR.

Zn(2+) is bound by residues His122, His126, and His132.

Belongs to the endoribonuclease YbeY family. Zn(2+) serves as cofactor.

The protein localises to the cytoplasm. Functionally, single strand-specific metallo-endoribonuclease involved in late-stage 70S ribosome quality control and in maturation of the 3' terminus of the 16S rRNA. This chain is Endoribonuclease YbeY, found in Bacillus cereus (strain ATCC 10987 / NRS 248).